A 337-amino-acid chain; its full sequence is Adenylosuccinate synthetase (337 aa).

Residues 12-18 and 42-44 contribute to the GTP site; these read GDEGKGK and GHT. The Proton acceptor role is filled by aspartate 13. Mg(2+) contacts are provided by aspartate 13 and glycine 42. IMP is bound by residues 13–16, 40–43, threonine 127, arginine 141, glutamine 179, threonine 194, and arginine 256; these read DEGK and NAGH. Histidine 43 functions as the Proton donor in the catalytic mechanism. Position 252–258 (252–258) interacts with substrate; that stretch reads TVTGRRR. GTP contacts are provided by residues arginine 258, 284–286, and 324–326; these read CLD and STG.

This sequence belongs to the adenylosuccinate synthetase family. As to quaternary structure, homodimer. Mg(2+) serves as cofactor.

It localises to the cytoplasm. The catalysed reaction is IMP + L-aspartate + GTP = N(6)-(1,2-dicarboxyethyl)-AMP + GDP + phosphate + 2 H(+). Its pathway is purine metabolism; AMP biosynthesis via de novo pathway; AMP from IMP: step 1/2. In terms of biological role, plays an important role in the de novo pathway of purine nucleotide biosynthesis. Catalyzes the first committed step in the biosynthesis of AMP from IMP. The sequence is that of Adenylosuccinate synthetase from Methanococcus maripaludis (strain C6 / ATCC BAA-1332).